We begin with the raw amino-acid sequence, 881 residues long: MGKKIKKEVEPPPKDVFDPITIESKKAATVVLMLKSPEEDILAKACEAIYKFALKGEENKATLLELGAVEPLTKLLTHEDKTVRRNAMMIFGILASNSDVKKLLRELEVMNSVIAQLSPEEEVVIHEFASLCLANMSVEYTGKVQIFEHGGLEPLIRLLSSSDPDVKKNSIECIYNLVQDFQCRTTLQELNAIPPILELLRSEYPIIQLLALKTLGVITCDKEARTMLKENQGLDHLTKILETKELNDLHVEALSVIANCLEDMDTMVLMQQTGSLKKVLSFAESSTIPDIQKNAAKAIAKAAYDPENRKVFHEQEVEKCLVTLLGSDSDGTKIAASQAISALCENLSCKEFFNTQGIPQIVQLLRSDNEEVREAAALALANLTTSSPANANAAAEADAIDPLINILSSKRDGAIANAATVLTNMATQEPLRAIIQNHEIMHALLGPLHSTNTLVQSTAALTVAATACDVEARTQLRNCGGLVPLVGLLHSKNDEVRRHASWAVMVCAGDEPMAVELCRLGALNILEEINRSLSRKNKFSEAAYNKLLNNNLSLKYSQTGYLSSSNIISDGFYDYGRINPGTKLLSLKELCLQELNDQRAILLVNNKSDTSPPPSMEDKSSDVGYGRSISSSSSLRRGSKEKANAIFGSPTEEKSEPASVRNTILSRAFTKEKGVSKKKSRLQLICSSYLLWKGKGKKEEEKVKEEEEILALPKFTEGSPEKEWNPPPDPEFCVYVLEVTKSILPIVNLKEQIEVLAKYVADKMGGKIPKEKLADFSWELHISELKFQLKSNVVPIGYIKKGIFYHRALLFKALADKIGVGCSLVRGEYSRGWNEVKLVNEARKGMIGNLPPPEEYIVDLMFHPGNLLKLRSKEADLYRFL.

ARM repeat units lie at residues 15 to 54 (DVFD…KFAL), 57 to 96 (EENK…ILAS), 98 to 138 (SDVK…NMSV), 140 to 179 (YTGK…NLVQ), 181 to 220 (FQCR…VITC), 222 to 262 (KEAR…NCLE), 264 to 304 (MDTM…KAAY), 306 to 345 (PENR…ALCE), 346 to 385 (NLSC…NLTT), 388 to 427 (PANA…NMAT), 429 to 468 (EPLR…ATAC), and 470 to 509 (VEAR…VCAG). S-palmitoyl cysteine attachment occurs at residues Cys-507 and Cys-518. The tract at residues 605–659 (NNKSDTSPPPSMEDKSSDVGYGRSISSSSSLRRGSKEKANAIFGSPTEEKSEPAS) is disordered. Residues 622 to 636 (DVGYGRSISSSSSLR) show a composition bias toward low complexity.

In terms of assembly, homodimer. Interacts with PIK3C3, PIK3R4 and BECN1. Interacts (via ARM domains) with ATG14. Palmitoylation is important for its function in autophagy. As to expression, testis-specific.

Essential for male fertility and sperm motility. During spermatogenesis, promotes the autophagic degradation of excessive ribosomes, providing energy resources for mitochondria and thus ensuring sperm flagellar motility. The sequence is that of Armadillo repeat-containing protein 3 (Armc3) from Mus musculus (Mouse).